The following is a 900-amino-acid chain: Alanine--tRNA ligase (900 aa).

Residues histidine 604, histidine 608, cysteine 708, and histidine 712 each contribute to the Zn(2+) site.

It belongs to the class-II aminoacyl-tRNA synthetase family. Requires Zn(2+) as cofactor.

It localises to the cytoplasm. It carries out the reaction tRNA(Ala) + L-alanine + ATP = L-alanyl-tRNA(Ala) + AMP + diphosphate. Its function is as follows. Catalyzes the attachment of alanine to tRNA(Ala) in a two-step reaction: alanine is first activated by ATP to form Ala-AMP and then transferred to the acceptor end of tRNA(Ala). Also edits incorrectly charged Ser-tRNA(Ala) and Gly-tRNA(Ala) via its editing domain. The protein is Alanine--tRNA ligase of Saccharolobus islandicus (strain M.16.27) (Sulfolobus islandicus).